The sequence spans 469 residues: GTPase Der (469 aa).

2 EngA-type G domains span residues 3–166 and 177–350; these read PVIA…PEDE and LRLA…ESAN. GTP-binding positions include 9-16, 56-60, 118-121, 183-190, 230-234, and 295-298; these read GRPNVGKS, DTGGI, NKVD, DTAGV, and NKWD. The KH-like domain occupies 351-435; it reads LKVSPAKLTQ…PVKIEFKTSE (85 aa).

This sequence belongs to the TRAFAC class TrmE-Era-EngA-EngB-Septin-like GTPase superfamily. EngA (Der) GTPase family. As to quaternary structure, associates with the 50S ribosomal subunit.

In terms of biological role, GTPase that plays an essential role in the late steps of ribosome biogenesis. The chain is GTPase Der from Acinetobacter baumannii (strain ACICU).